The sequence spans 647 residues: Chaperone protein DnaK (647 aa).

Position 198 is a phosphothreonine; by autocatalysis (threonine 198). The disordered stretch occupies residues 603–647 (EQAQGAGGAQGFDPNAFQGGDAGQQQKADDGVVDAEFTEVKDDKK). A compositionally biased stretch (low complexity) spans 618–628 (AFQGGDAGQQQ).

It belongs to the heat shock protein 70 family.

In terms of biological role, acts as a chaperone. The protein is Chaperone protein DnaK of Acinetobacter baylyi (strain ATCC 33305 / BD413 / ADP1).